Reading from the N-terminus, the 24-residue chain is 60 kDa chaperonin, mitochondrial (24 aa).

The protein belongs to the chaperonin (HSP60) family. As to quaternary structure, forms a single seven-member ring complex, in tight association with the p63 protein. As to expression, testis.

Its subcellular location is the mitochondrion. Its function is as follows. Implicated in mitochondrial protein import and macromolecular assembly. May facilitate the correct folding of imported proteins. May also prevent misfolding and promote the refolding and proper assembly of unfolded polypeptides generated under stress conditions in the mitochondrial matrix. The polypeptide is 60 kDa chaperonin, mitochondrial (Heliothis virescens (Tobacco budworm moth)).